We begin with the raw amino-acid sequence, 124 residues long: uncharacterized protein (124 aa).

The chain crosses the membrane as a helical span at residues 2–22 (AIIIAIIAAVIVIAALITFNV). Residues 24–124 (NASPGPEKQE…ALLSMKNKKK (101 aa)) are disordered. Basic and acidic residues-rich tracts occupy residues 30-58 (EKQE…RAAE), 67-81 (DSPK…DDIY), and 89-113 (KHSD…RSYR).

It localises to the membrane. This is an uncharacterized protein from Bacillus subtilis (strain 168).